The sequence spans 168 residues: uncharacterized protein (168 aa).

The next 2 helical transmembrane spans lie at 41–61 (LLPW…LFFI) and 133–153 (KFVI…FFVL).

It localises to the cell membrane. This is an uncharacterized protein from Thermotoga maritima (strain ATCC 43589 / DSM 3109 / JCM 10099 / NBRC 100826 / MSB8).